A 243-amino-acid polypeptide reads, in one-letter code: Pyridoxine 5'-phosphate synthase (243 aa).

A 3-amino-2-oxopropyl phosphate-binding site is contributed by Asn9. Residue 11 to 12 (DH) participates in 1-deoxy-D-xylulose 5-phosphate binding. Position 20 (Arg20) interacts with 3-amino-2-oxopropyl phosphate. His45 functions as the Proton acceptor in the catalytic mechanism. The 1-deoxy-D-xylulose 5-phosphate site is built by Arg47 and His52. The active-site Proton acceptor is Glu72. Thr102 is a 1-deoxy-D-xylulose 5-phosphate binding site. His193 serves as the catalytic Proton donor. Residues Gly194 and 215 to 216 (GH) contribute to the 3-amino-2-oxopropyl phosphate site.

The protein belongs to the PNP synthase family. In terms of assembly, homooctamer; tetramer of dimers.

It is found in the cytoplasm. It catalyses the reaction 3-amino-2-oxopropyl phosphate + 1-deoxy-D-xylulose 5-phosphate = pyridoxine 5'-phosphate + phosphate + 2 H2O + H(+). It participates in cofactor biosynthesis; pyridoxine 5'-phosphate biosynthesis; pyridoxine 5'-phosphate from D-erythrose 4-phosphate: step 5/5. Catalyzes the complicated ring closure reaction between the two acyclic compounds 1-deoxy-D-xylulose-5-phosphate (DXP) and 3-amino-2-oxopropyl phosphate (1-amino-acetone-3-phosphate or AAP) to form pyridoxine 5'-phosphate (PNP) and inorganic phosphate. The chain is Pyridoxine 5'-phosphate synthase from Aliivibrio fischeri (strain ATCC 700601 / ES114) (Vibrio fischeri).